The following is a 171-amino-acid chain: Co-chaperone protein HscB (171 aa).

The J domain maps to Asp-2–Leu-74.

Belongs to the HscB family. As to quaternary structure, interacts with HscA and stimulates its ATPase activity. Interacts with IscU.

Its function is as follows. Co-chaperone involved in the maturation of iron-sulfur cluster-containing proteins. Seems to help targeting proteins to be folded toward HscA. The chain is Co-chaperone protein HscB from Shigella sonnei (strain Ss046).